A 379-amino-acid polypeptide reads, in one-letter code: Alcohol dehydrogenase 3 (379 aa).

Zn(2+)-binding residues include Cys47, Thr49, His69, Cys99, Cys102, Cys105, Cys113, and Cys177. 2 residues coordinate an alcohol: Thr49 and His69. Thr49 is an NAD(+) binding site. NAD(+) contacts are provided by residues 202–207 (GLGAVG), Asp226, Lys231, Thr272, Val295, 295–297 (VGV), Phe322, and Arg372.

This sequence belongs to the zinc-containing alcohol dehydrogenase family. As to quaternary structure, homodimer. The cofactor is Zn(2+).

The protein localises to the cytoplasm. It catalyses the reaction a primary alcohol + NAD(+) = an aldehyde + NADH + H(+). The enzyme catalyses a secondary alcohol + NAD(+) = a ketone + NADH + H(+). The protein is Alcohol dehydrogenase 3 (ADH3) of Hordeum vulgare (Barley).